We begin with the raw amino-acid sequence, 207 residues long: Abscisic acid receptor PYL9 (207 aa).

Positions 31–197 are START-like; that stretch reads FPPSTTTATT…NLQMLAAVAE (167 aa). Abscisate contacts are provided by residues Lys-74, 104–109, 131–137, and Glu-162; these read ASTSTE and RLRNYRS. The short motif at 100 to 104 is the Gate loop element; the sequence is SGLPA. A Latch loop motif is present at residues 130 to 132; that stretch reads HRL.

It belongs to the PYR/PYL/RCAR abscisic acid intracellular receptor family. As to quaternary structure, homodimer. Interacts with PP2C06. Interacts with PP2C50. Binding to PP2C50 is dependent on the presence of abscisic acid (ABA). Interacts with PP2C30 and PP2C53. Binding to PP2C30 and PP2C53 is dependent on the presence of ABA.

The protein resides in the cytoplasm. It localises to the cytosol. The protein localises to the nucleus. In terms of biological role, involved in abscisic acid (ABA) signaling during seed germination and abiotic stress response. Acts as a positive regulator of ABA-mediated inhibition of seed germination, and tolerance to drought and cold stresses. Inhibits the activity of the protein phosphatases PP2C06 and PP2C09 when activated by abscisic acid (ABA). This chain is Abscisic acid receptor PYL9, found in Oryza sativa subsp. japonica (Rice).